We begin with the raw amino-acid sequence, 263 residues long: HTH-type transcriptional repressor NanR (263 aa).

A disordered region spans residues 1-25; the sequence is MDVMNAFDSQAEDSPTSLGRSLRRR. Residues 30-98 form the HTH gntR-type domain; the sequence is KKLSEMVEEE…NGERARVSRP (69 aa). The H-T-H motif DNA-binding region spans 58-77; the sequence is ERELMAFFNVGRPSVREALA.

Belongs to the NanR family.

Functionally, transcriptional repressor that controls expression of the genes required for the catabolism of sialic acids. This chain is HTH-type transcriptional repressor NanR, found in Salmonella schwarzengrund (strain CVM19633).